A 305-amino-acid polypeptide reads, in one-letter code: Translation initiation factor eIF2B subunit alpha (305 aa).

Belongs to the eIF-2B alpha/beta/delta subunits family. In terms of assembly, component of the translation initiation factor 2B (eIF2B) complex which is a heterodecamer of two sets of five different subunits: alpha, beta, gamma, delta and epsilon. Subunits alpha, beta and delta comprise a regulatory subcomplex and subunits epsilon and gamma comprise a catalytic subcomplex. Within the complex, the hexameric regulatory complex resides at the center, with the two heterodimeric catalytic subcomplexes bound on opposite sides.

It is found in the cytoplasm. It localises to the cytosol. Its activity is regulated as follows. Activated by the chemical integrated stress response (ISR) inhibitor ISRIB which stimulates guanine nucleotide exchange factor activity for both phosphorylated and unphosphorylated eIF2. Its function is as follows. Acts as a component of the translation initiation factor 2B (eIF2B) complex, which catalyzes the exchange of GDP for GTP on eukaryotic initiation factor 2 (eIF2) gamma subunit. Its guanine nucleotide exchange factor activity is repressed when bound to eIF2 complex phosphorylated on the alpha subunit, thereby limiting the amount of methionyl-initiator methionine tRNA available to the ribosome and consequently global translation is repressed. The sequence is that of Translation initiation factor eIF2B subunit alpha (EIF2B1) from Bos taurus (Bovine).